We begin with the raw amino-acid sequence, 1286 residues long: X-linked retinitis pigmentosa GTPase regulator-interacting protein 1 (1286 aa).

Residues 144-193 are disordered; that stretch reads QVGHRQLHTAGAPVPEKPKRGPRDRLSYTAPPSFKEHATNENRGEVASKP. Composition is skewed to basic and acidic residues over residues 159–169 and 177–189; these read EKPKRGPRDRL and FKEH…RGEV. The stretch at 294–584 forms a coiled coil; that stretch reads KAQLTEVQEA…LEGILRSHDL (291 aa). The 126-residue stretch at 781-906 folds into the C2 domain; the sequence is GGRKAQEEEF…AKNESIKGDF (126 aa). Disordered stretches follow at residues 934-1008 and 1058-1108; these read SFLK…RKHG and EEEE…PMSQ. Composition is skewed to basic and acidic residues over residues 940-960, 988-998, and 1070-1084; these read AQTK…EEKA, HGGERKEKEHQ, and KQKE…KESS. The span at 1085–1096 shows a compositional bias: polar residues; the sequence is EQGSEVSEAQTT. The interaction with RPGR stretch occupies residues 1091–1281; that stretch reads SEAQTTDSDD…VLHAIYKEMT (191 aa).

The protein belongs to the RPGRIP1 family. In terms of assembly, forms homodimers and elongated homopolymers. Interacts with RPGR. Interacts with NPHP4. Interacts with NEK4. Interacts with SPATA7. Interacts with CEP290/NPHP6; mediating the association between RPGR and CEP290/NPHP6. In terms of tissue distribution, strong expression in retina, with weaker expression in testis. Expressed in other neurons such as amacrine cells. Colocalizes with RGPR in the outer segment of rod photoreceptors and cone outer segments.

It localises to the cell projection. It is found in the cilium. Its function is as follows. May function as scaffolding protein. Required for normal location of RPGR at the connecting cilium of photoreceptor cells. Required for normal disk morphogenesis and disk organization in the outer segment of photoreceptor cells and for survival of photoreceptor cells. In Homo sapiens (Human), this protein is X-linked retinitis pigmentosa GTPase regulator-interacting protein 1 (RPGRIP1).